A 347-amino-acid chain; its full sequence is Ribosomal RNA small subunit methyltransferase H (347 aa).

Residues 47 to 49 (GGY), Asp64, Phe91, Asp114, and Gln121 contribute to the S-adenosyl-L-methionine site. The disordered stretch occupies residues 291-347 (PAVKGAVGPTAEEEERNPRARSAKLRAGIRTENPPLEDDLSLFGLPKLPETNELARS).

Belongs to the methyltransferase superfamily. RsmH family.

The protein resides in the cytoplasm. The catalysed reaction is cytidine(1402) in 16S rRNA + S-adenosyl-L-methionine = N(4)-methylcytidine(1402) in 16S rRNA + S-adenosyl-L-homocysteine + H(+). Specifically methylates the N4 position of cytidine in position 1402 (C1402) of 16S rRNA. The polypeptide is Ribosomal RNA small subunit methyltransferase H (Brucella anthropi (strain ATCC 49188 / DSM 6882 / CCUG 24695 / JCM 21032 / LMG 3331 / NBRC 15819 / NCTC 12168 / Alc 37) (Ochrobactrum anthropi)).